Here is a 204-residue protein sequence, read N- to C-terminus: Octanoyltransferase (204 aa).

Residues 27 to 202 form the BPL/LPL catalytic domain; the sequence is QGGEEALLLL…RFQPFLHLHL (176 aa). Residues 65–72, 132–134, and 145–147 contribute to the substrate site; these read RGGDVTYH, SIG, and GFA. The active-site Acyl-thioester intermediate is cysteine 163.

The protein belongs to the LipB family.

It is found in the cytoplasm. It catalyses the reaction octanoyl-[ACP] + L-lysyl-[protein] = N(6)-octanoyl-L-lysyl-[protein] + holo-[ACP] + H(+). It functions in the pathway protein modification; protein lipoylation via endogenous pathway; protein N(6)-(lipoyl)lysine from octanoyl-[acyl-carrier-protein]: step 1/2. Catalyzes the transfer of endogenously produced octanoic acid from octanoyl-acyl-carrier-protein onto the lipoyl domains of lipoate-dependent enzymes. Lipoyl-ACP can also act as a substrate although octanoyl-ACP is likely to be the physiological substrate. In Geobacter sp. (strain M21), this protein is Octanoyltransferase.